The sequence spans 206 residues: uncharacterized protein (206 aa).

Residues 4-24 traverse the membrane as a helical segment; it reads LLVVIAVALFIAAIVVLVVAI.

It localises to the membrane. This is an uncharacterized protein from Mycobacterium tuberculosis (strain CDC 1551 / Oshkosh).